The primary structure comprises 180 residues: Small ribosomal subunit protein eS10y (180 aa).

The disordered stretch occupies residues 92-180 (LKKQQKPLGR…GGGAAGSDLP (89 aa)). Positions 108–128 (DRPRGPPRGDGERRFGDRDGY) are enriched in basic and acidic residues. A compositionally biased stretch (gly residues) spans 152–180 (FRGGAGGARQGFGRGAGGFGGGAAGSDLP).

This sequence belongs to the eukaryotic ribosomal protein eS10 family.

It localises to the cytoplasm. The sequence is that of Small ribosomal subunit protein eS10y (RPS10B) from Arabidopsis thaliana (Mouse-ear cress).